The chain runs to 872 residues: DNA mismatch repair protein MutS (872 aa).

Gly602–Ser609 contributes to the ATP binding site.

It belongs to the DNA mismatch repair MutS family.

In terms of biological role, this protein is involved in the repair of mismatches in DNA. It is possible that it carries out the mismatch recognition step. This protein has a weak ATPase activity. This is DNA mismatch repair protein MutS from Staphylococcus aureus (strain MRSA252).